Consider the following 126-residue polypeptide: Large ribosomal subunit protein bL12 (126 aa).

It belongs to the bacterial ribosomal protein bL12 family. Homodimer. Part of the ribosomal stalk of the 50S ribosomal subunit. Forms a multimeric L10(L12)X complex, where L10 forms an elongated spine to which 2 to 4 L12 dimers bind in a sequential fashion. Binds GTP-bound translation factors.

Forms part of the ribosomal stalk which helps the ribosome interact with GTP-bound translation factors. Is thus essential for accurate translation. The polypeptide is Large ribosomal subunit protein bL12 (Methylocella silvestris (strain DSM 15510 / CIP 108128 / LMG 27833 / NCIMB 13906 / BL2)).